The following is a 384-amino-acid chain: Probable L-aspartate decarboxylase (384 aa).

Position 233 is an N6-(pyridoxal phosphate)lysine (lysine 233).

This sequence belongs to the group II decarboxylase family. MfnA subfamily. Pyridoxal 5'-phosphate is required as a cofactor.

It catalyses the reaction L-aspartate + H(+) = beta-alanine + CO2. The protein operates within cofactor biosynthesis; coenzyme A biosynthesis. Its function is as follows. Catalyzes the decarboxylation of L-aspartate to produce beta-alanine. This chain is Probable L-aspartate decarboxylase, found in Pyrococcus abyssi (strain GE5 / Orsay).